The following is a 324-amino-acid chain: ATP-dependent 6-phosphofructokinase (324 aa).

Gly-15 contacts ATP. Residue 25–29 (RGVVR) coordinates ADP. ATP-binding positions include 76–77 (RF) and 106–109 (GDGS). Asp-107 contributes to the Mg(2+) binding site. A substrate-binding site is contributed by 130–132 (TID). Asp-132 (proton acceptor) is an active-site residue. An ADP-binding site is contributed by Arg-159. Substrate is bound by residues Arg-167 and 174–176 (MGR). Residues 190–192 (GCE), Lys-216, and 218–220 (KRH) contribute to the ADP site. Residues Glu-227, Arg-248, and 254-257 (HIQR) each bind substrate.

Belongs to the phosphofructokinase type A (PFKA) family. ATP-dependent PFK group I subfamily. Prokaryotic clade 'B1' sub-subfamily. Homotetramer. Requires Mg(2+) as cofactor.

It localises to the cytoplasm. The enzyme catalyses beta-D-fructose 6-phosphate + ATP = beta-D-fructose 1,6-bisphosphate + ADP + H(+). It participates in carbohydrate degradation; glycolysis; D-glyceraldehyde 3-phosphate and glycerone phosphate from D-glucose: step 3/4. Allosterically activated by ADP and other diphosphonucleosides, and allosterically inhibited by phosphoenolpyruvate. Its function is as follows. Catalyzes the phosphorylation of D-fructose 6-phosphate to fructose 1,6-bisphosphate by ATP, the first committing step of glycolysis. In Haemophilus ducreyi (strain 35000HP / ATCC 700724), this protein is ATP-dependent 6-phosphofructokinase.